The following is a 104-amino-acid chain: N(4)-acetylcytidine amidohydrolase (104 aa).

The region spanning 7–104 is the ASCH domain; it reads TFFTRFEQDI…FWVIAFELVD (98 aa). Lysine 21 serves as the catalytic Proton acceptor. Threonine 24 acts as the Nucleophile in catalysis. Glutamate 74 acts as the Proton donor in catalysis.

The protein belongs to the N(4)-acetylcytidine amidohydrolase family.

It catalyses the reaction N(4)-acetylcytidine + H2O = cytidine + acetate + H(+). The catalysed reaction is N(4)-acetyl-2'-deoxycytidine + H2O = 2'-deoxycytidine + acetate + H(+). It carries out the reaction N(4)-acetylcytosine + H2O = cytosine + acetate + H(+). Catalyzes the hydrolysis of N(4)-acetylcytidine (ac4C). This is N(4)-acetylcytidine amidohydrolase from Pasteurella multocida (strain Pm70).